The chain runs to 304 residues: MSASTAAPARDRLRIAIQKSGRLAEPARSLLAACGLSWRQSRDKLFCYGESLPVDLLLVRDDDIPGLIADGVCDLGIVGQNELEEQAAERRRNGLPAAYHAVRGVGFGQCRLMLAVPEEWDWHGVGQLAGKRIATSYPAILADWLERQGIDATVVELSGSVEIAPRLGTADLICDLVSSGATLAANQLKPVELVMESEAVLAGAVREPADARAGLLAMLLRRMDGVLKLRDSKLLMFRAEQTNVDALRRLLPDADPLVQLPDDGNGALRLQTMCHGAVTWQRLEELERAGAQGLMVLTVERSLA.

It belongs to the ATP phosphoribosyltransferase family. Long subfamily. It depends on Mg(2+) as a cofactor.

It is found in the cytoplasm. It catalyses the reaction 1-(5-phospho-beta-D-ribosyl)-ATP + diphosphate = 5-phospho-alpha-D-ribose 1-diphosphate + ATP. The protein operates within amino-acid biosynthesis; L-histidine biosynthesis; L-histidine from 5-phospho-alpha-D-ribose 1-diphosphate: step 1/9. Feedback inhibited by histidine. Functionally, catalyzes the condensation of ATP and 5-phosphoribose 1-diphosphate to form N'-(5'-phosphoribosyl)-ATP (PR-ATP). Has a crucial role in the pathway because the rate of histidine biosynthesis seems to be controlled primarily by regulation of HisG enzymatic activity. This Xanthomonas euvesicatoria pv. vesicatoria (strain 85-10) (Xanthomonas campestris pv. vesicatoria) protein is ATP phosphoribosyltransferase.